Reading from the N-terminus, the 144-residue chain is Large ribosomal subunit protein uL15 (144 aa).

Residues 1 to 14 (MKLHELKPNEGARD) show a composition bias toward basic and acidic residues. Residues 1-43 (MKLHELKPNEGARDVRKRVGRGTSSGTGKTAGRGQKGQKARSK) are disordered. Gly residues predominate over residues 23–35 (TSSGTGKTAGRGQ).

The protein belongs to the universal ribosomal protein uL15 family. Part of the 50S ribosomal subunit.

Functionally, binds to the 23S rRNA. The polypeptide is Large ribosomal subunit protein uL15 (Latilactobacillus sakei subsp. sakei (strain 23K) (Lactobacillus sakei subsp. sakei)).